The following is an 84-amino-acid chain: Large ribosomal subunit protein bL27 (84 aa).

Residues 1-11 (MATTKAGGSTK) are compositionally biased toward polar residues. Residues 1-20 (MATTKAGGSTKNGRDSHSKR) form a disordered region.

This sequence belongs to the bacterial ribosomal protein bL27 family.

In Mycoplasmopsis synoviae (strain 53) (Mycoplasma synoviae), this protein is Large ribosomal subunit protein bL27.